Reading from the N-terminus, the 303-residue chain is Albumin b-32 (303 aa).

Low complexity predominate over residues 112–137 (ATPTSSATTPGGSASAAGTRTSSATR). The disordered stretch occupies residues 112–175 (ATPTSSATTP…GGGGADADAD (64 aa)). Residues 146-156 (ARDDQGRQRPG) show a composition bias toward basic and acidic residues.

The protein belongs to the ribosome-inactivating protein family. Type 1 RIP subfamily. Monomer. Endosperm.

It is found in the cytoplasm. It carries out the reaction Endohydrolysis of the N-glycosidic bond at one specific adenosine on the 28S rRNA.. In terms of biological role, a possible regulatory factor for the synthesis of zeins, the major group of storage proteins. The sequence is that of Albumin b-32 (O6) from Zea mays (Maize).